Reading from the N-terminus, the 193-residue chain is Holliday junction branch migration complex subunit RuvA (193 aa).

The interval 1-64 (MIGRIAGVLL…EDAHLLYGFG (64 aa)) is domain I. Residues 65 to 139 (TAEERSTFRE…GKIGADLGAM (75 aa)) are domain II. Residues 139-143 (MAGAA) form a flexible linker region. Positions 144–193 (SASDHASDILNALLALGYSEKEALAAVKNVPAGTGVSEGIKLALKALSKG) are domain III.

Belongs to the RuvA family. As to quaternary structure, homotetramer. Forms an RuvA(8)-RuvB(12)-Holliday junction (HJ) complex. HJ DNA is sandwiched between 2 RuvA tetramers; dsDNA enters through RuvA and exits via RuvB. An RuvB hexamer assembles on each DNA strand where it exits the tetramer. Each RuvB hexamer is contacted by two RuvA subunits (via domain III) on 2 adjacent RuvB subunits; this complex drives branch migration. In the full resolvosome a probable DNA-RuvA(4)-RuvB(12)-RuvC(2) complex forms which resolves the HJ.

It is found in the cytoplasm. Functionally, the RuvA-RuvB-RuvC complex processes Holliday junction (HJ) DNA during genetic recombination and DNA repair, while the RuvA-RuvB complex plays an important role in the rescue of blocked DNA replication forks via replication fork reversal (RFR). RuvA specifically binds to HJ cruciform DNA, conferring on it an open structure. The RuvB hexamer acts as an ATP-dependent pump, pulling dsDNA into and through the RuvAB complex. HJ branch migration allows RuvC to scan DNA until it finds its consensus sequence, where it cleaves and resolves the cruciform DNA. The sequence is that of Holliday junction branch migration complex subunit RuvA from Paraburkholderia xenovorans (strain LB400).